The chain runs to 184 residues: Phosphonoformate cytidylyltransferase (184 aa).

The enzyme catalyses phosphonoformate + CTP = CMP-5'-phosphonoformate + diphosphate. Its pathway is secondary metabolite biosynthesis; bialaphos biosynthesis. Its function is as follows. Catalyzes the displacement of the beta- and gamma-phosphates of CTP by phosphonoformate to produce CMP-5'-phosphonoformate, an intermediate in the biosynthesis of phosphinothricin tripeptide (PTT), also known as bialaphos (BA), a natural-product antibiotic and potent herbicide. In Streptomyces viridochromogenes (strain DSM 40736 / JCM 4977 / BCRC 1201 / Tue 494), this protein is Phosphonoformate cytidylyltransferase.